The primary structure comprises 40 residues: Neutral phospholipase A2 homolog cannitoxin beta chain 2 (40 aa).

In terms of assembly, heterotrimer of alpha, beta, and gamma chains; non-covalently linked. Expressed by the venom gland.

The protein localises to the secreted. Its function is as follows. Heterotrimer: Snake venom phospholipase A2 (PLA2) heterotrimer that acts as a potent presynaptic neurotoxin by blocking synaptic transmission and synaptic vesicle recycling. Enzymatic activity is essential for the neurotoxic effects. May act by binding in a calcium-dependent fashion to neurotonal pentraxin-1 (NPTX1) and neurotonal pentraxin-2 (NPTX2), but not to neuronal pentraxin receptor (NPTXR). Also binds to taipoxin-associated calcium binding protein 49 (RCN2), a protein localized in the lumen of endoplasmic reticulum. In terms of biological role, monomer (beta chain): Snake venom phospholipase A2 homolog that is neither toxic nor enzymatically active. Does not bind calcium. The sequence is that of Neutral phospholipase A2 homolog cannitoxin beta chain 2 from Oxyuranus scutellatus canni (Papuan taipan).